The sequence spans 877 residues: Phosphoenolpyruvate carboxylase (877 aa).

Catalysis depends on residues histidine 138 and lysine 543.

This sequence belongs to the PEPCase type 1 family. It depends on Mg(2+) as a cofactor.

It carries out the reaction oxaloacetate + phosphate = phosphoenolpyruvate + hydrogencarbonate. Its function is as follows. Forms oxaloacetate, a four-carbon dicarboxylic acid source for the tricarboxylic acid cycle. In Aeromonas hydrophila subsp. hydrophila (strain ATCC 7966 / DSM 30187 / BCRC 13018 / CCUG 14551 / JCM 1027 / KCTC 2358 / NCIMB 9240 / NCTC 8049), this protein is Phosphoenolpyruvate carboxylase.